The following is a 143-amino-acid chain: S-adenosylmethionine decarboxylase proenzyme (143 aa).

S66 functions as the Schiff-base intermediate with substrate; via pyruvic acid in the catalytic mechanism. Pyruvic acid (Ser); by autocatalysis is present on S66. Catalysis depends on H71, which acts as the Proton acceptor; for processing activity. Residue C86 is the Proton donor; for catalytic activity of the active site.

The protein belongs to the prokaryotic AdoMetDC family. Type 1 subfamily. As to quaternary structure, heterotetramer of two alpha and two beta chains arranged as a dimer of alpha/beta heterodimers. The cofactor is pyruvate. Post-translationally, is synthesized initially as an inactive proenzyme. Formation of the active enzyme involves a self-maturation process in which the active site pyruvoyl group is generated from an internal serine residue via an autocatalytic post-translational modification. Two non-identical subunits are generated from the proenzyme in this reaction, and the pyruvate is formed at the N-terminus of the alpha chain, which is derived from the carboxyl end of the proenzyme. The post-translation cleavage follows an unusual pathway, termed non-hydrolytic serinolysis, in which the side chain hydroxyl group of the serine supplies its oxygen atom to form the C-terminus of the beta chain, while the remainder of the serine residue undergoes an oxidative deamination to produce ammonia and the pyruvoyl group blocking the N-terminus of the alpha chain.

It catalyses the reaction S-adenosyl-L-methionine + H(+) = S-adenosyl 3-(methylsulfanyl)propylamine + CO2. Its pathway is amine and polyamine biosynthesis; S-adenosylmethioninamine biosynthesis; S-adenosylmethioninamine from S-adenosyl-L-methionine: step 1/1. In terms of biological role, catalyzes the decarboxylation of S-adenosylmethionine to S-adenosylmethioninamine (dcAdoMet), the propylamine donor required for the synthesis of the polyamines spermine and spermidine from the diamine putrescine. The polypeptide is S-adenosylmethionine decarboxylase proenzyme (Thermococcus kodakarensis (strain ATCC BAA-918 / JCM 12380 / KOD1) (Pyrococcus kodakaraensis (strain KOD1))).